A 523-amino-acid polypeptide reads, in one-letter code: Sugar carrier protein C (523 aa).

Residues 1 to 25 (MPAVGGIPPSGGNRKVYPGNLTLYV) lie on the Cytoplasmic side of the membrane. The next 12 helical transmembrane spans lie at 26–46 (TVTC…IGIS), 86–106 (MFTS…STIT), 120–140 (VLFC…MLIL), 143–163 (ILLG…LSEM), 172–192 (LNIG…VLNY), 205–225 (LSLG…LVLP), 298–320 (LTGI…FGSD), 327–347 (VITG…VDKW), 351–371 (FLFL…AACI), 387–407 (WYAV…AWSW), 433–453 (SVNM…LCHL), and 456–476 (GLFI…YYFL). The Cytoplasmic segment spans residues 477-523 (PETKGIPIEEMGQVWKQHWYWSRYVVDEDYPNGGLEMGKEGRIPKNV).

Belongs to the major facilitator superfamily. Sugar transporter (TC 2.A.1.1) family.

It localises to the membrane. The sequence is that of Sugar carrier protein C (STC) from Ricinus communis (Castor bean).